Consider the following 112-residue polypeptide: Nitrogen regulatory protein P-II (112 aa).

Y51 is modified (O-UMP-tyrosine).

The protein belongs to the P(II) protein family. Homotrimer.

Its function is as follows. P-II indirectly controls the transcription of the glutamine synthetase gene (glnA). P-II prevents NR-II-catalyzed conversion of NR-I to NR-I-phosphate, the transcriptional activator of glnA. When P-II is uridylylated to P-II-UMP, these events are reversed. When the ratio of Gln to 2-ketoglutarate decreases, P-II is uridylylated to P-II-UMP, which causes the deadenylation of glutamine synthetase, so activating the enzyme. This chain is Nitrogen regulatory protein P-II (glnB), found in Rhodospirillum rubrum (strain ATCC 11170 / ATH 1.1.1 / DSM 467 / LMG 4362 / NCIMB 8255 / S1).